Reading from the N-terminus, the 748-residue chain is Malate synthase G (748 aa).

Acetyl-CoA-binding positions include Val141, 148-149, Ser298, and Arg335; that span reads RF. Residue Arg362 is the Proton acceptor of the active site. Glyoxylate contacts are provided by residues Arg362, Glu453, and 478–481; that span reads GFLD. Residues Glu453 and Asp481 each contribute to the Mg(2+) site. Pro562 is an acetyl-CoA binding site. Cys639 is subject to Cysteine sulfenic acid (-SOH). The Proton donor role is filled by Asp653.

The protein belongs to the malate synthase family. GlcB subfamily. As to quaternary structure, monomer. It depends on Mg(2+) as a cofactor.

It is found in the cytoplasm. It catalyses the reaction glyoxylate + acetyl-CoA + H2O = (S)-malate + CoA + H(+). Its pathway is carbohydrate metabolism; glyoxylate cycle; (S)-malate from isocitrate: step 2/2. Involved in the glycolate utilization. Catalyzes the condensation and subsequent hydrolysis of acetyl-coenzyme A (acetyl-CoA) and glyoxylate to form malate and CoA. The protein is Malate synthase G of Corynebacterium efficiens (strain DSM 44549 / YS-314 / AJ 12310 / JCM 11189 / NBRC 100395).